We begin with the raw amino-acid sequence, 176 residues long: Protein MAL2 (176 aa).

Over M1–T34 the chain is Cytoplasmic. The 145-residue stretch at I31–R175 folds into the MARVEL domain. Residues Y35–A55 form a helical membrane-spanning segment. Over S56–G66 the chain is Lumenal. A helical membrane pass occupies residues W67 to L87. At S88–D102 the chain is on the cytoplasmic side. Residues F103–A123 traverse the membrane as a helical segment. Residues T124–N149 lie on the Lumenal side of the membrane. An N-linked (GlcNAc...) asparagine glycan is attached at N132. The helical transmembrane segment at V150–A170 threads the bilayer. Topologically, residues L171–P176 are cytoplasmic.

This sequence belongs to the MAL family. Interacts with TPD52L2.

It localises to the cell membrane. Its subcellular location is the apical cell membrane. Member of the machinery of polarized transport. Required for the indirect transcytotic route at the step of the egress of the transcytosing cargo from perinuclear endosomes in order for it to travel to the apical surface via a raft-dependent pathway. The chain is Protein MAL2 (MAL2) from Pongo abelii (Sumatran orangutan).